Consider the following 93-residue polypeptide: Large ribosomal subunit protein bL27 (93 aa).

The propeptide occupies 1–9; it reads MIKINLQLF.

It belongs to the bacterial ribosomal protein bL27 family. Post-translationally, the N-terminus is cleaved by ribosomal processing cysteine protease Prp.

The chain is Large ribosomal subunit protein bL27 from Ruminiclostridium cellulolyticum (strain ATCC 35319 / DSM 5812 / JCM 6584 / H10) (Clostridium cellulolyticum).